Reading from the N-terminus, the 352-residue chain is MSQKILFIDRDGTLIEEPKSDFQIDTLEKLRFEKDAIPTLLKLKNFGFKFVMVSNQDGLGTPSFPKENFEIAHEKMLDILKSCGIEFQDIFICPHFENENCACRKPKTAMLEEYIKHELYDKEQSFVIGDRESDMILASNLGVRGLRYGELSWKEIENEILSSFRSASYQRTTKETDIKVKVCLNGGKISIKTGIDFFDHMLEQIAVHGGIGLEISCKGDLEIDEHHSVEDVALALGACIKKALGDKIGIARYGFALPMDECLASCAMDFCNRPHLVYKAKFKKSHLGALSTEMIEHFFYSLSYAMGVSLHLKVKGKNDHHKAEGLFKAFAKALKMAVKIESENLASSKGVI.

Residues 1–164 (MSQKILFIDR…EIENEILSSF (164 aa)) are histidinol-phosphatase. The active-site Nucleophile is the aspartate 9. Mg(2+)-binding residues include aspartate 9 and aspartate 11. Aspartate 11 functions as the Proton donor in the catalytic mechanism. Zn(2+) contacts are provided by cysteine 93, histidine 95, cysteine 101, and cysteine 103. Residue aspartate 130 coordinates Mg(2+). The interval 165–352 (RSASYQRTTK…ENLASSKGVI (188 aa)) is imidazoleglycerol-phosphate dehydratase.

It in the N-terminal section; belongs to the histidinol-phosphatase family. In the C-terminal section; belongs to the imidazoleglycerol-phosphate dehydratase family. Requires Mg(2+) as cofactor. The cofactor is Zn(2+).

Its subcellular location is the cytoplasm. The catalysed reaction is D-erythro-1-(imidazol-4-yl)glycerol 3-phosphate = 3-(imidazol-4-yl)-2-oxopropyl phosphate + H2O. It catalyses the reaction L-histidinol phosphate + H2O = L-histidinol + phosphate. Its pathway is amino-acid biosynthesis; L-histidine biosynthesis; L-histidine from 5-phospho-alpha-D-ribose 1-diphosphate: step 6/9. It participates in amino-acid biosynthesis; L-histidine biosynthesis; L-histidine from 5-phospho-alpha-D-ribose 1-diphosphate: step 8/9. The polypeptide is Histidine biosynthesis bifunctional protein HisB (Campylobacter jejuni subsp. jejuni serotype O:23/36 (strain 81-176)).